The sequence spans 147 residues: uncharacterized protein (147 aa).

A helical transmembrane segment spans residues 69-89; that stretch reads IFFFLSLYLSSIKIPMLILNI.

Its subcellular location is the membrane. This is an uncharacterized protein from Saccharomyces cerevisiae (strain ATCC 204508 / S288c) (Baker's yeast).